Consider the following 71-residue polypeptide: MFTYYQAENSTAEPALVNAIEQGLRAQHGVVTEDDILMELTKWVEASDNDILSDIYQQTINYVVSGQHPTL.

The sequence is that of Protein bdm (bdm) from Escherichia coli (strain K12).